Consider the following 1004-residue polypeptide: ABC transporter G family member 25 (1004 aa).

The first 27 residues, 1 to 27 (MAASQLLAAAVAAAVFLAALLVPPARC), serve as a signal peptide directing secretion. A helical transmembrane segment spans residues 271–291 (ATALFGGILIVILSVVLLLVY). Positions 343–373 (SDQLAASSNEARHATEGNGKRSKNRKKLAHA) are disordered. Residues 352-361 (EARHATEGNG) show a composition bias toward basic and acidic residues. Residues 362-372 (KRSKNRKKLAH) show a composition bias toward basic residues. Residues 419–659 (VVFKGLTLSI…FSSLGIKVPE (241 aa)) enclose the ABC transporter domain. 451 to 458 (GPSGAGKT) is a binding site for ATP. The next 6 helical transmembrane spans lie at 776–796 (ATLQ…IGTI), 804–824 (FGVA…QLAA), 886–906 (LVFL…AIWF), 907–927 (ELGL…LVGT), 943–963 (WALE…WLIT), and 978–998 (FVLC…IALL).

The protein belongs to the ABC transporter superfamily. ABCG family. Eye pigment precursor importer (TC 3.A.1.204) subfamily.

The protein resides in the membrane. The polypeptide is ABC transporter G family member 25 (Oryza sativa subsp. japonica (Rice)).